A 370-amino-acid chain; its full sequence is tRNA-specific 2-thiouridylase MnmA (370 aa).

Residues 25–32 and leucine 51 contribute to the ATP site; that span reads ALSGGVDS. The active-site Nucleophile is the cysteine 112. A disulfide bridge links cysteine 112 with cysteine 211. Glycine 137 contributes to the ATP binding site. The interaction with tRNA stretch occupies residues 161-163; it reads KDQ. Cysteine 211 functions as the Cysteine persulfide intermediate in the catalytic mechanism. An interaction with tRNA region spans residues 316–317; the sequence is RY.

The protein belongs to the MnmA/TRMU family.

The protein localises to the cytoplasm. The catalysed reaction is S-sulfanyl-L-cysteinyl-[protein] + uridine(34) in tRNA + AH2 + ATP = 2-thiouridine(34) in tRNA + L-cysteinyl-[protein] + A + AMP + diphosphate + H(+). In terms of biological role, catalyzes the 2-thiolation of uridine at the wobble position (U34) of tRNA, leading to the formation of s(2)U34. The sequence is that of tRNA-specific 2-thiouridylase MnmA from Synechococcus sp. (strain JA-3-3Ab) (Cyanobacteria bacterium Yellowstone A-Prime).